A 274-amino-acid chain; its full sequence is UPF0758 protein RHE_CH01848 (274 aa).

The interval 1–37 is disordered; it reads MAKGPVATSSDDELPFETEEPVADERSFFGGRPQKPA. Residues 10–22 are compositionally biased toward acidic residues; sequence SDDELPFETEEPV. The MPN domain maps to 152–274; the sequence is VLSSWSSVIQ…HVSLKGLKLI (123 aa). Zn(2+)-binding residues include His-223, His-225, and Asp-236. Residues 223–236 carry the JAMM motif motif; sequence HNHPSGDPTPSRAD.

This sequence belongs to the UPF0758 family.

The chain is UPF0758 protein RHE_CH01848 from Rhizobium etli (strain ATCC 51251 / DSM 11541 / JCM 21823 / NBRC 15573 / CFN 42).